The primary structure comprises 276 residues: Diaminopimelate epimerase (276 aa).

N13, Q46, and N66 together coordinate substrate. The Proton donor role is filled by C75. Residues 76–77, N159, N192, and 210–211 contribute to the substrate site; these read GN and ER. C219 acts as the Proton acceptor in catalysis. 220-221 lines the substrate pocket; that stretch reads GT.

This sequence belongs to the diaminopimelate epimerase family. As to quaternary structure, homodimer.

The protein resides in the cytoplasm. It carries out the reaction (2S,6S)-2,6-diaminopimelate = meso-2,6-diaminopimelate. Its pathway is amino-acid biosynthesis; L-lysine biosynthesis via DAP pathway; DL-2,6-diaminopimelate from LL-2,6-diaminopimelate: step 1/1. Catalyzes the stereoinversion of LL-2,6-diaminopimelate (L,L-DAP) to meso-diaminopimelate (meso-DAP), a precursor of L-lysine and an essential component of the bacterial peptidoglycan. The sequence is that of Diaminopimelate epimerase from Hahella chejuensis (strain KCTC 2396).